Consider the following 129-residue polypeptide: Fluoride-specific ion channel FluC 1 (129 aa).

Helical transmembrane passes span 9–29, 33–53, 62–82, and 98–118; these read LSVGIFAFFGGGLRAYLNLIW, GTLTANIIGCFLLAFFTYFFV, LVTGLSTGFVGSFTTFSSFNL, and IYFFSSIFIGFLFAYLGMLVG. 2 residues coordinate Na(+): Gly72 and Thr75.

It belongs to the fluoride channel Fluc/FEX (TC 1.A.43) family.

The protein localises to the cell membrane. It catalyses the reaction fluoride(in) = fluoride(out). Its activity is regulated as follows. Na(+) is not transported, but it plays an essential structural role and its presence is essential for fluoride channel function. In terms of biological role, fluoride-specific ion channel. Important for reducing fluoride concentration in the cell, thus reducing its toxicity. The sequence is that of Fluoride-specific ion channel FluC 1 from Lactobacillus johnsonii (strain CNCM I-12250 / La1 / NCC 533).